The chain runs to 225 residues: 2-C-methyl-D-erythritol 4-phosphate cytidylyltransferase (225 aa).

It belongs to the IspD/TarI cytidylyltransferase family. IspD subfamily.

The catalysed reaction is 2-C-methyl-D-erythritol 4-phosphate + CTP + H(+) = 4-CDP-2-C-methyl-D-erythritol + diphosphate. The protein operates within isoprenoid biosynthesis; isopentenyl diphosphate biosynthesis via DXP pathway; isopentenyl diphosphate from 1-deoxy-D-xylulose 5-phosphate: step 2/6. Functionally, catalyzes the formation of 4-diphosphocytidyl-2-C-methyl-D-erythritol from CTP and 2-C-methyl-D-erythritol 4-phosphate (MEP). The sequence is that of 2-C-methyl-D-erythritol 4-phosphate cytidylyltransferase from Prochlorococcus marinus (strain MIT 9313).